The primary structure comprises 379 residues: Homoserine O-succinyltransferase (379 aa).

The AB hydrolase-1 domain maps to 51–360 (NAVLICHALS…DAPQGHDAFL (310 aa)). Ser157 acts as the Nucleophile in catalysis. Arg227 is a substrate binding site. Catalysis depends on residues Asp323 and His356. Asp357 serves as a coordination point for substrate.

Belongs to the AB hydrolase superfamily. MetX family. In terms of assembly, homodimer.

The protein localises to the cytoplasm. It catalyses the reaction L-homoserine + succinyl-CoA = O-succinyl-L-homoserine + CoA. The protein operates within amino-acid biosynthesis; L-methionine biosynthesis via de novo pathway; O-succinyl-L-homoserine from L-homoserine: step 1/1. In terms of biological role, transfers a succinyl group from succinyl-CoA to L-homoserine, forming succinyl-L-homoserine. In Pseudomonas paraeruginosa (strain DSM 24068 / PA7) (Pseudomonas aeruginosa (strain PA7)), this protein is Homoserine O-succinyltransferase.